The sequence spans 184 residues: Envelope protein 169 (184 aa).

Topologically, residues 1–6 (MKKYIK) are intravirion. A helical membrane pass occupies residues 7–27 (MYLVLLIAIILFITILVIFLI). Residues 28 to 184 (SGLFYPEQNP…TVMAIPRKVL (157 aa)) are Virion surface-facing.

The protein belongs to the asfivirus envelope protein p22 family.

The protein resides in the virion membrane. It is found in the host cell membrane. This is Envelope protein 169 from Ornithodoros (relapsing fever ticks).